A 244-amino-acid polypeptide reads, in one-letter code: Phosphonates import ATP-binding protein PhnC (244 aa).

The ABC transporter domain maps to 6–244; sequence IECHNLETAY…LQAQFVVNSQ (239 aa). 41–48 is an ATP binding site; that stretch reads GLNGAGKS.

This sequence belongs to the ABC transporter superfamily. Phosphonates importer (TC 3.A.1.9.1) family. The complex is composed of two ATP-binding proteins (PhnC), two transmembrane proteins (PhnE) and a solute-binding protein (PhnD).

It localises to the cell inner membrane. It carries out the reaction phosphonate(out) + ATP + H2O = phosphonate(in) + ADP + phosphate + H(+). Its function is as follows. Part of the ABC transporter complex PhnCDE involved in phosphonates import. Responsible for energy coupling to the transport system. In Trichormus variabilis (strain ATCC 29413 / PCC 7937) (Anabaena variabilis), this protein is Phosphonates import ATP-binding protein PhnC.